The following is a 390-amino-acid chain: Two-component response regulator ORR29 (390 aa).

The Response regulatory domain maps to 13–130 (SAMVIDEDKC…TIKNLWQYVD (118 aa)). At Asp-65 the chain carries 4-aspartylphosphate. A DNA-binding region (myb-like GARP) is located at residues 169–226 (KKYYLMWTPHLQKKFLHALQILGKDASPKNIKKIMGVDNIDCRQIAAHLQKHRLRLTK). 2 disordered regions span residues 233 to 271 (FTTDTSKDESNSRIGPAESHHVCRNASTLQPRSNTQPTE) and 303 to 339 (SKHSSDPSGDEDEQVVVGGDQDGCANEANDIDSSGDH). The span at 257–271 (NASTLQPRSNTQPTE) shows a compositional bias: polar residues.

Belongs to the ARR family. Type-B subfamily. Post-translationally, two-component system major event consists of a His-to-Asp phosphorelay between a sensor histidine kinase (HK) and a response regulator (RR). In plants, the His-to-Asp phosphorelay involves an additional intermediate named Histidine-containing phosphotransfer protein (HPt). This multistep phosphorelay consists of a His-Asp-His-Asp sequential transfer of a phosphate group between first a His and an Asp of the HK protein, followed by the transfer to a conserved His of the HPt protein and finally the transfer to an Asp in the receiver domain of the RR protein.

It localises to the cytoplasm. Its subcellular location is the cytosol. The protein resides in the nucleus. Transcriptional activator that binds specific DNA sequence. Functions as a response regulator involved in His-to-Asp phosphorelay signal transduction system. Phosphorylation of the Asp residue in the receiver domain activates the ability of the protein to promote the transcription of target genes. May directly activate some type-A response regulators in response to cytokinins. Functions as a response regulator in response to cytokinins. The chain is Two-component response regulator ORR29 from Oryza sativa subsp. japonica (Rice).